The chain runs to 822 residues: SKI/DACH domain-containing protein 1 (822 aa).

Positions 245 to 261 are enriched in basic residues; sequence HHHHHHHHHHHHHHHRA. The interval 245–370 is disordered; it reads HHHHHHHHHH…SSSGSSQVSV (126 aa). The span at 278-318 shows a compositional bias: low complexity; the sequence is PHLGSFPESCSSDSESSSYSDHAANDSDFGSSLSSSSNSVS. Over residues 319–338 the composition is skewed to acidic residues; the sequence is SEEEEEEGEEEEEEEEEEEG. A Glycyl lysine isopeptide (Lys-Gly) (interchain with G-Cter in SUMO2) cross-link involves residue lysine 602. Disordered regions lie at residues 658-677 and 706-732; these read ETPS…TLGS and LQTP…THEG. A compositionally biased stretch (polar residues) spans 660–675; it reads PSLNPLAQSQGLSCTL.

This sequence belongs to the DACH/dachshund family.

This chain is SKI/DACH domain-containing protein 1 (Skida1), found in Mus musculus (Mouse).